The primary structure comprises 100 residues: Small ribosomal subunit protein uS14c (100 aa).

The protein belongs to the universal ribosomal protein uS14 family. Part of the 30S ribosomal subunit.

The protein localises to the plastid. The protein resides in the chloroplast. Binds 16S rRNA, required for the assembly of 30S particles. In Cycas taitungensis (Prince sago), this protein is Small ribosomal subunit protein uS14c.